Here is a 245-residue protein sequence, read N- to C-terminus: Adenosylcobinamide-GDP ribazoletransferase (245 aa).

Helical transmembrane passes span 31-51 (FGRA…VLYG), 61-81 (PLLQ…ALHL), 113-133 (AAVV…AALL), 138-158 (PGLL…LFLT), and 192-212 (LAFG…FAWL).

It belongs to the CobS family. Requires Mg(2+) as cofactor.

The protein localises to the cell inner membrane. It catalyses the reaction alpha-ribazole + adenosylcob(III)inamide-GDP = adenosylcob(III)alamin + GMP + H(+). The enzyme catalyses alpha-ribazole 5'-phosphate + adenosylcob(III)inamide-GDP = adenosylcob(III)alamin 5'-phosphate + GMP + H(+). It functions in the pathway cofactor biosynthesis; adenosylcobalamin biosynthesis; adenosylcobalamin from cob(II)yrinate a,c-diamide: step 7/7. Its function is as follows. Joins adenosylcobinamide-GDP and alpha-ribazole to generate adenosylcobalamin (Ado-cobalamin). Also synthesizes adenosylcobalamin 5'-phosphate from adenosylcobinamide-GDP and alpha-ribazole 5'-phosphate. The protein is Adenosylcobinamide-GDP ribazoletransferase of Pseudomonas paraeruginosa (strain DSM 24068 / PA7) (Pseudomonas aeruginosa (strain PA7)).